The chain runs to 279 residues: uncharacterized protein (279 aa).

Positions 1 to 77 (MGILEQLENP…VTLAKEISNK (77 aa)) constitute an HTH rpiR-type domain. A DNA-binding region (H-T-H motif) is located at residues 37–56 (ISIIAKESGVGEATITRFTK). An SIS domain is found at 123 to 263 (CRDLIMNAKR…YTEVIKEMFS (141 aa)).

This is an uncharacterized protein from Clostridium perfringens (strain 13 / Type A).